The primary structure comprises 276 residues: NAD(+)--dinitrogen-reductase ADP-D-ribosyltransferase (276 aa).

As to quaternary structure, monomer.

It catalyses the reaction L-arginyl-[dinitrogen reductase] + NAD(+) = N(omega)-alpha-(ADP-D-ribosyl)-L-arginyl-[dinitrogen reductase] + nicotinamide + H(+). Functionally, involved in the regulation of the nitrogen fixation activity by the reversible ADP-ribosylation of the dinitrogenase reductase component of the nitrogenase enzyme complex. The ADP-ribosyltransferase (DraT) transfers the ADP-ribose group from NAD to dinitrogenase reductase. The ADP-ribose group is removed through the action of the ADP-ribosylglycohydrolase (DraG). This chain is NAD(+)--dinitrogen-reductase ADP-D-ribosyltransferase (draT), found in Rhodospirillum rubrum.